Consider the following 313-residue polypeptide: tRNA uridine(34) hydroxylase (313 aa).

The Rhodanese domain occupies Ser124 to Ser218. Residue Cys178 is the Cysteine persulfide intermediate of the active site.

This sequence belongs to the TrhO family.

The enzyme catalyses uridine(34) in tRNA + AH2 + O2 = 5-hydroxyuridine(34) in tRNA + A + H2O. In terms of biological role, catalyzes oxygen-dependent 5-hydroxyuridine (ho5U) modification at position 34 in tRNAs. This Pseudomonas fluorescens (strain ATCC BAA-477 / NRRL B-23932 / Pf-5) protein is tRNA uridine(34) hydroxylase.